We begin with the raw amino-acid sequence, 69 residues long: DNA gyrase inhibitor YacG (69 aa).

Cys-7, Cys-10, Cys-26, and Cys-30 together coordinate Zn(2+).

Belongs to the DNA gyrase inhibitor YacG family. Interacts with GyrB. The cofactor is Zn(2+).

Inhibits all the catalytic activities of DNA gyrase by preventing its interaction with DNA. Acts by binding directly to the C-terminal domain of GyrB, which probably disrupts DNA binding by the gyrase. The protein is DNA gyrase inhibitor YacG of Shewanella baltica (strain OS223).